A 387-amino-acid chain; its full sequence is MTFDPASALAEIKARDAYRWRRIVESPQDTRVVIDGAPRVNFCSNDYLGLANHPAVREAFRRGVDRWGVGSGASHLVCGHSAAHHALEEELAEFTGRPRALLFSTGYMANLGVVSALAGRGDTVFEDRLNHASLLDGGLLSGARFRRYRHADARALEAALAESRAETRLVVTDGVFSMDGDLAPLPELARVARDGRAWLMVDDAHGLGVLGAEGRGTLEHFGLGAPEVPVLVGTLGKALGTFGAFVAGSESLIDYLIQRARTYVYTTALPPAVAEATRVSLRLVREEPERRERLRCNVRRFRAGAASLGFGLGDLPGPIQPLVIGANADALEASRRLGERGFLVSAIRPPTVQAGTARLRITLSAAHSNEQIDGLLEALADAVPQEA.

R19 provides a ligand contact to substrate. 106–107 (GY) lines the pyridoxal 5'-phosphate pocket. Position 131 (H131) interacts with substrate. Positions 177, 205, and 234 each coordinate pyridoxal 5'-phosphate. An N6-(pyridoxal phosphate)lysine modification is found at K237. T351 serves as a coordination point for substrate.

The protein belongs to the class-II pyridoxal-phosphate-dependent aminotransferase family. BioF subfamily. In terms of assembly, homodimer. Requires pyridoxal 5'-phosphate as cofactor.

It catalyses the reaction 6-carboxyhexanoyl-[ACP] + L-alanine + H(+) = (8S)-8-amino-7-oxononanoate + holo-[ACP] + CO2. It participates in cofactor biosynthesis; biotin biosynthesis. In terms of biological role, catalyzes the decarboxylative condensation of pimeloyl-[acyl-carrier protein] and L-alanine to produce 8-amino-7-oxononanoate (AON), [acyl-carrier protein], and carbon dioxide. The protein is 8-amino-7-oxononanoate synthase of Methylococcus capsulatus (strain ATCC 33009 / NCIMB 11132 / Bath).